Here is a 149-residue protein sequence, read N- to C-terminus: D-aminoacyl-tRNA deacylase (149 aa).

Positions 139 to 140 (GP) match the Gly-cisPro motif, important for rejection of L-amino acids motif.

Belongs to the DTD family. In terms of assembly, homodimer.

The protein localises to the cytoplasm. The enzyme catalyses glycyl-tRNA(Ala) + H2O = tRNA(Ala) + glycine + H(+). It carries out the reaction a D-aminoacyl-tRNA + H2O = a tRNA + a D-alpha-amino acid + H(+). An aminoacyl-tRNA editing enzyme that deacylates mischarged D-aminoacyl-tRNAs. Also deacylates mischarged glycyl-tRNA(Ala), protecting cells against glycine mischarging by AlaRS. Acts via tRNA-based rather than protein-based catalysis; rejects L-amino acids rather than detecting D-amino acids in the active site. By recycling D-aminoacyl-tRNA to D-amino acids and free tRNA molecules, this enzyme counteracts the toxicity associated with the formation of D-aminoacyl-tRNA entities in vivo and helps enforce protein L-homochirality. The polypeptide is D-aminoacyl-tRNA deacylase (DTD1) (Candida glabrata (strain ATCC 2001 / BCRC 20586 / JCM 3761 / NBRC 0622 / NRRL Y-65 / CBS 138) (Yeast)).